The sequence spans 227 residues: Cytochrome c oxidase subunit 2 (227 aa).

The Mitochondrial intermembrane segment spans residues 1–14 (MAHPVQLSLQDATS). The chain crosses the membrane as a helical span at residues 15–45 (PVMEELITFHDHAFMAMSLISFLVLYALLST). Residues 46 to 59 (LTTKLTNTSITDAQ) lie on the Mitochondrial matrix side of the membrane. The chain crosses the membrane as a helical span at residues 60–87 (EMETIWTILPAIILILIALPSLRILYLT). Topologically, residues 88 to 227 (DEVNDPSFTI…IFEMGPVLTL (140 aa)) are mitochondrial intermembrane. Cu cation-binding residues include His-161, Cys-196, Glu-198, Cys-200, His-204, and Met-207. Glu-198 is a Mg(2+) binding site.

This sequence belongs to the cytochrome c oxidase subunit 2 family. As to quaternary structure, component of the cytochrome c oxidase (complex IV, CIV), a multisubunit enzyme composed of 14 subunits. The complex is composed of a catalytic core of 3 subunits MT-CO1, MT-CO2 and MT-CO3, encoded in the mitochondrial DNA, and 11 supernumerary subunits COX4I, COX5A, COX5B, COX6A, COX6B, COX6C, COX7A, COX7B, COX7C, COX8 and NDUFA4, which are encoded in the nuclear genome. The complex exists as a monomer or a dimer and forms supercomplexes (SCs) in the inner mitochondrial membrane with NADH-ubiquinone oxidoreductase (complex I, CI) and ubiquinol-cytochrome c oxidoreductase (cytochrome b-c1 complex, complex III, CIII), resulting in different assemblies (supercomplex SCI(1)III(2)IV(1) and megacomplex MCI(2)III(2)IV(2)). Found in a complex with TMEM177, COA6, COX18, COX20, SCO1 and SCO2. Interacts with TMEM177 in a COX20-dependent manner. Interacts with COX20. Interacts with COX16. The cofactor is Cu cation.

It is found in the mitochondrion inner membrane. The catalysed reaction is 4 Fe(II)-[cytochrome c] + O2 + 8 H(+)(in) = 4 Fe(III)-[cytochrome c] + 2 H2O + 4 H(+)(out). Component of the cytochrome c oxidase, the last enzyme in the mitochondrial electron transport chain which drives oxidative phosphorylation. The respiratory chain contains 3 multisubunit complexes succinate dehydrogenase (complex II, CII), ubiquinol-cytochrome c oxidoreductase (cytochrome b-c1 complex, complex III, CIII) and cytochrome c oxidase (complex IV, CIV), that cooperate to transfer electrons derived from NADH and succinate to molecular oxygen, creating an electrochemical gradient over the inner membrane that drives transmembrane transport and the ATP synthase. Cytochrome c oxidase is the component of the respiratory chain that catalyzes the reduction of oxygen to water. Electrons originating from reduced cytochrome c in the intermembrane space (IMS) are transferred via the dinuclear copper A center (CU(A)) of subunit 2 and heme A of subunit 1 to the active site in subunit 1, a binuclear center (BNC) formed by heme A3 and copper B (CU(B)). The BNC reduces molecular oxygen to 2 water molecules using 4 electrons from cytochrome c in the IMS and 4 protons from the mitochondrial matrix. In Macaca mulatta (Rhesus macaque), this protein is Cytochrome c oxidase subunit 2 (MT-CO2).